We begin with the raw amino-acid sequence, 855 residues long: DNA mismatch repair protein MutS (855 aa).

Position 616 to 623 (616 to 623 (GPNMGGKS)) interacts with ATP.

It belongs to the DNA mismatch repair MutS family.

Its function is as follows. This protein is involved in the repair of mismatches in DNA. It is possible that it carries out the mismatch recognition step. This protein has a weak ATPase activity. This Salmonella paratyphi C (strain RKS4594) protein is DNA mismatch repair protein MutS.